Consider the following 455-residue polypeptide: Argininosuccinate lyase (455 aa).

It belongs to the lyase 1 family. Argininosuccinate lyase subfamily.

It is found in the cytoplasm. It carries out the reaction 2-(N(omega)-L-arginino)succinate = fumarate + L-arginine. It functions in the pathway amino-acid biosynthesis; L-arginine biosynthesis; L-arginine from L-ornithine and carbamoyl phosphate: step 3/3. This Shewanella halifaxensis (strain HAW-EB4) protein is Argininosuccinate lyase.